The primary structure comprises 83 residues: Translational regulator CsrA (83 aa).

Belongs to the CsrA/RsmA family. As to quaternary structure, homodimer; the beta-strands of each monomer intercalate to form a hydrophobic core, while the alpha-helices form wings that extend away from the core.

Its subcellular location is the cytoplasm. In terms of biological role, a translational regulator that binds mRNA to regulate translation initiation and/or mRNA stability. Usually binds in the 5'-UTR at or near the Shine-Dalgarno sequence preventing ribosome-binding, thus repressing translation. Its main target seems to be the major flagellin gene, while its function is anatagonized by FliW. The chain is Translational regulator CsrA from Nocardioides sp. (strain ATCC BAA-499 / JS614).